We begin with the raw amino-acid sequence, 195 residues long: Pyruvoyl-dependent arginine decarboxylase AaxB (195 aa).

At S53 the chain carries Pyruvic acid (Ser).

Belongs to the pyruvoyl-dependent arginine decarboxylase family. Trimer of an alpha-beta dimer. The cofactor is pyruvate.

The protein localises to the cytoplasm. It carries out the reaction L-arginine + H(+) = agmatine + CO2. Its function is as follows. Part of the AaxABC system, catalyzes the decarboxylation of L-arginine. The arginine uptake by the bacterium in the macrophage may be a virulence factor against the host innate immune response. In Chlamydia abortus (strain DSM 27085 / S26/3) (Chlamydophila abortus), this protein is Pyruvoyl-dependent arginine decarboxylase AaxB (aaxB).